Consider the following 496-residue polypeptide: Cyclin-dependent kinase 16 (496 aa).

The tract at residues 1-97 is disordered; sequence MDRMKKIKRQ…TSSDEVQSPV (97 aa). The residue at position 12 (Ser12) is a Phosphoserine; by BRSK2. A phosphoserine mark is found at Ser36, Ser42, Ser64, Ser65, Ser78, Ser82, and Ser89. Basic and acidic residues predominate over residues 69–78; sequence IVHEDLKMGS. The segment covering 83–93 has biased composition (polar residues); it reads DQASATSSDEV. Residue Ser95 is modified to Phosphoserine; by CDK5. Residues Ser110, Ser119, Ser138, Ser146, Ser153, and Ser155 each carry the phosphoserine modification. Residues 165-446 form the Protein kinase domain; sequence YIKLDKLGEG…AEDAMKHPFF (282 aa). ATP contacts are provided by residues 171-179 and Lys194; that span reads LGEGTYATV. Phosphothreonine is present on Thr175. The active-site Proton acceptor is the Asp286. A Phosphothreonine modification is found at Thr380. Residues Ser391, Ser478, and Ser480 each carry the phosphoserine modification.

The protein belongs to the protein kinase superfamily. CMGC Ser/Thr protein kinase family. CDC2/CDKX subfamily. As to quaternary structure, found in a complex containing CABLES1, CDK17 and TDRD7. Interacts with BRSK2. Identified in a complex with NSF, syntaxin-1, synaptotagmin, SYN1, SYP and CDK5R1. Interacts with YWHAH, YWHAQ and YWHAZ. Interacts with CCNY; this interaction increases the CDK16 kinase activity. Interacts with CCNYL1; this interaction mutually increases the stability of CDK16 and CCNYL1 and increases the kinase activity of CDK16. Interacts with NSF. Post-translationally, phosphorylation of CDK16 is essential for the binding of CCNY, but also essential for the regulation of CDK16 kinase activity. Phosphorylation of CDK16 is essential for the binding of CCNYl1, but also essential for the regulation of CDK16 kinase activity. Ser-146 and Ser-153 are the most critical sites for the binding of CCNYL1 and for modulating CDK16 kinase activity. Phosphorylation at Ser-153 inhibits kinase activity. In terms of tissue distribution, detected in pancreas islets (at protein level). Detected in brain and pancreas.

It is found in the cytoplasm. Its subcellular location is the cytoplasmic vesicle. It localises to the secretory vesicle. The protein resides in the cell membrane. The protein localises to the synapse. It is found in the synaptosome. It carries out the reaction L-seryl-[protein] + ATP = O-phospho-L-seryl-[protein] + ADP + H(+). It catalyses the reaction L-threonyl-[protein] + ATP = O-phospho-L-threonyl-[protein] + ADP + H(+). Its function is as follows. Protein kinase that plays a role in vesicle-mediated transport processes and exocytosis. Regulates GH1 release by brain neurons. Phosphorylates NSF, and thereby regulates NSF oligomerization. Required for normal spermatogenesis. Regulates neuron differentiation and dendrite development. Plays a role in the regulation of insulin secretion in response to changes in blood glucose levels. Can phosphorylate CCNY at 'Ser-336' (in vitro). This chain is Cyclin-dependent kinase 16 (CDK16), found in Homo sapiens (Human).